A 128-amino-acid polypeptide reads, in one-letter code: Transcription antitermination protein NusB (128 aa).

It belongs to the NusB family.

Its function is as follows. Involved in transcription antitermination. Required for transcription of ribosomal RNA (rRNA) genes. Binds specifically to the boxA antiterminator sequence of the ribosomal RNA (rrn) operons. This Listeria innocua serovar 6a (strain ATCC BAA-680 / CLIP 11262) protein is Transcription antitermination protein NusB.